The chain runs to 504 residues: Anaerobic nitric oxide reductase transcription regulator NorR (504 aa).

Asp57 is subject to 4-aspartylphosphate. The Sigma-54 factor interaction domain occupies 187–416 (MIGLSPGMTQ…LEHAIHRAVV (230 aa)). ATP contacts are provided by residues 215–222 (GETGTGKE) and 278–287 (ADNGTLFLDE). The segment at residues 479-498 (WAASARMLETDVANLHRLAK) is a DNA-binding region (H-T-H motif).

Its pathway is nitrogen metabolism; nitric oxide reduction. Required for the expression of anaerobic nitric oxide (NO) reductase, acts as a transcriptional activator for at least the norVW operon. Activation also requires sigma-54. This chain is Anaerobic nitric oxide reductase transcription regulator NorR, found in Escherichia coli (strain SMS-3-5 / SECEC).